Here is an 80-residue protein sequence, read N- to C-terminus: D-alanyl carrier protein 1 (80 aa).

The region spanning 1-80 (MTMDDTKATV…KIVAKVENLQ (80 aa)) is the Carrier domain. Ser-38 bears the O-(pantetheine 4'-phosphoryl)serine mark.

Belongs to the DltC family. In terms of processing, 4'-phosphopantetheine is transferred from CoA to a specific serine of apo-DCP.

The protein resides in the cytoplasm. The protein operates within cell wall biogenesis; lipoteichoic acid biosynthesis. In terms of biological role, carrier protein involved in the D-alanylation of lipoteichoic acid (LTA). The loading of thioester-linked D-alanine onto DltC is catalyzed by D-alanine--D-alanyl carrier protein ligase DltA. The DltC-carried D-alanyl group is further transferred to cell membrane phosphatidylglycerol (PG) by forming an ester bond, probably catalyzed by DltD. D-alanylation of LTA plays an important role in modulating the properties of the cell wall in Gram-positive bacteria, influencing the net charge of the cell wall. The polypeptide is D-alanyl carrier protein 1 (Lactiplantibacillus plantarum (strain ATCC BAA-793 / NCIMB 8826 / WCFS1) (Lactobacillus plantarum)).